The chain runs to 139 residues: Putative pre-16S rRNA nuclease (139 aa).

The protein belongs to the YqgF nuclease family.

Its subcellular location is the cytoplasm. In terms of biological role, could be a nuclease involved in processing of the 5'-end of pre-16S rRNA. In Streptococcus sanguinis (strain SK36), this protein is Putative pre-16S rRNA nuclease.